Reading from the N-terminus, the 227-residue chain is Cytochrome c oxidase subunit 2 (227 aa).

The Mitochondrial intermembrane portion of the chain corresponds to 1 to 14 (MAYPFQLGLQDATS). The chain crosses the membrane as a helical span at residues 15-45 (PIMEELTNFHDHTLMIVFLISSLVLYIISLM). Over 46–59 (LTTKLTHTSTMDAQ) the chain is Mitochondrial matrix. A helical transmembrane segment spans residues 60 to 87 (EVETIWTILPAAILVLIALPSLRILYMM). Residues 88–227 (DEINNPVLTV…HFENWSASMV (140 aa)) lie on the Mitochondrial intermembrane side of the membrane. 6 residues coordinate Cu cation: His161, Cys196, Glu198, Cys200, His204, and Met207. Glu198 provides a ligand contact to Mg(2+).

It belongs to the cytochrome c oxidase subunit 2 family. In terms of assembly, component of the cytochrome c oxidase (complex IV, CIV), a multisubunit enzyme composed of 14 subunits. The complex is composed of a catalytic core of 3 subunits MT-CO1, MT-CO2 and MT-CO3, encoded in the mitochondrial DNA, and 11 supernumerary subunits COX4I, COX5A, COX5B, COX6A, COX6B, COX6C, COX7A, COX7B, COX7C, COX8 and NDUFA4, which are encoded in the nuclear genome. The complex exists as a monomer or a dimer and forms supercomplexes (SCs) in the inner mitochondrial membrane with NADH-ubiquinone oxidoreductase (complex I, CI) and ubiquinol-cytochrome c oxidoreductase (cytochrome b-c1 complex, complex III, CIII), resulting in different assemblies (supercomplex SCI(1)III(2)IV(1) and megacomplex MCI(2)III(2)IV(2)). Found in a complex with TMEM177, COA6, COX18, COX20, SCO1 and SCO2. Interacts with TMEM177 in a COX20-dependent manner. Interacts with COX20. Interacts with COX16. The cofactor is Cu cation.

The protein localises to the mitochondrion inner membrane. The catalysed reaction is 4 Fe(II)-[cytochrome c] + O2 + 8 H(+)(in) = 4 Fe(III)-[cytochrome c] + 2 H2O + 4 H(+)(out). Component of the cytochrome c oxidase, the last enzyme in the mitochondrial electron transport chain which drives oxidative phosphorylation. The respiratory chain contains 3 multisubunit complexes succinate dehydrogenase (complex II, CII), ubiquinol-cytochrome c oxidoreductase (cytochrome b-c1 complex, complex III, CIII) and cytochrome c oxidase (complex IV, CIV), that cooperate to transfer electrons derived from NADH and succinate to molecular oxygen, creating an electrochemical gradient over the inner membrane that drives transmembrane transport and the ATP synthase. Cytochrome c oxidase is the component of the respiratory chain that catalyzes the reduction of oxygen to water. Electrons originating from reduced cytochrome c in the intermembrane space (IMS) are transferred via the dinuclear copper A center (CU(A)) of subunit 2 and heme A of subunit 1 to the active site in subunit 1, a binuclear center (BNC) formed by heme A3 and copper B (CU(B)). The BNC reduces molecular oxygen to 2 water molecules using 4 electrons from cytochrome c in the IMS and 4 protons from the mitochondrial matrix. The protein is Cytochrome c oxidase subunit 2 (MT-CO2) of Uromys caudimaculatus (Giant white-tailed rat).